The primary structure comprises 217 residues: Adenylate kinase (217 aa).

An ATP-binding site is contributed by 10–15 (GGGKGT). Residues 30 to 59 (STGDMLRAAVASGSEVGKKAKAVMDAGQLV) form an NMP region. Residues Thr-31, Arg-36, 57-59 (QLV), 85-88 (GFPR), and Gln-92 each bind AMP. Residues 126-164 (GRYTCAKCGAGYHDKFQLPQVAGKCDSCGGTEFARRPDD) form an LID region. Arg-127 provides a ligand contact to ATP. Positions 130, 133, 150, and 153 each coordinate Zn(2+). AMP is bound by residues Arg-161 and Arg-172. Met-200 contributes to the ATP binding site.

It belongs to the adenylate kinase family. Monomer.

It localises to the cytoplasm. The enzyme catalyses AMP + ATP = 2 ADP. The protein operates within purine metabolism; AMP biosynthesis via salvage pathway; AMP from ADP: step 1/1. In terms of biological role, catalyzes the reversible transfer of the terminal phosphate group between ATP and AMP. Plays an important role in cellular energy homeostasis and in adenine nucleotide metabolism. This Paramagnetospirillum magneticum (strain ATCC 700264 / AMB-1) (Magnetospirillum magneticum) protein is Adenylate kinase.